The chain runs to 278 residues: Digeranylgeranylglyceryl phosphate synthase (278 aa).

The next 8 membrane-spanning stretches (helical) occupy residues 15 to 35, 36 to 56, 89 to 109, 133 to 153, 159 to 179, 203 to 223, 225 to 245, and 258 to 278; these read VIGS…WKIV, PIKL…GYII, IVLF…AFII, LIVA…FFEG, TLIP…VKGI, WFIS…PYFF, FNII…LVVL, and AYMK…TLPI.

Belongs to the UbiA prenyltransferase family. DGGGP synthase subfamily. Mg(2+) serves as cofactor.

It is found in the cell membrane. It carries out the reaction sn-3-O-(geranylgeranyl)glycerol 1-phosphate + (2E,6E,10E)-geranylgeranyl diphosphate = 2,3-bis-O-(geranylgeranyl)-sn-glycerol 1-phosphate + diphosphate. It participates in membrane lipid metabolism; glycerophospholipid metabolism. In terms of biological role, prenyltransferase that catalyzes the transfer of the geranylgeranyl moiety of geranylgeranyl diphosphate (GGPP) to the C2 hydroxyl of (S)-3-O-geranylgeranylglyceryl phosphate (GGGP). This reaction is the second ether-bond-formation step in the biosynthesis of archaeal membrane lipids. This is Digeranylgeranylglyceryl phosphate synthase from Sulfurisphaera tokodaii (strain DSM 16993 / JCM 10545 / NBRC 100140 / 7) (Sulfolobus tokodaii).